The primary structure comprises 100 residues: Urease subunit gamma (100 aa).

Belongs to the urease gamma subunit family. As to quaternary structure, heterotrimer of UreA (gamma), UreB (beta) and UreC (alpha) subunits. Three heterotrimers associate to form the active enzyme.

It localises to the cytoplasm. The catalysed reaction is urea + 2 H2O + H(+) = hydrogencarbonate + 2 NH4(+). It functions in the pathway nitrogen metabolism; urea degradation; CO(2) and NH(3) from urea (urease route): step 1/1. The polypeptide is Urease subunit gamma (Bacillus sp. (strain TB-90)).